The following is a 292-amino-acid chain: Bifunctional protein FolD (292 aa).

NADP(+)-binding positions include 169-171 (GRG), Thr196, and Val237.

The protein belongs to the tetrahydrofolate dehydrogenase/cyclohydrolase family. As to quaternary structure, homodimer.

The enzyme catalyses (6R)-5,10-methylene-5,6,7,8-tetrahydrofolate + NADP(+) = (6R)-5,10-methenyltetrahydrofolate + NADPH. It carries out the reaction (6R)-5,10-methenyltetrahydrofolate + H2O = (6R)-10-formyltetrahydrofolate + H(+). It functions in the pathway one-carbon metabolism; tetrahydrofolate interconversion. Catalyzes the oxidation of 5,10-methylenetetrahydrofolate to 5,10-methenyltetrahydrofolate and then the hydrolysis of 5,10-methenyltetrahydrofolate to 10-formyltetrahydrofolate. In Bifidobacterium longum (strain NCC 2705), this protein is Bifunctional protein FolD.